The chain runs to 143 residues: MFMGEYQHSIDEKGRLTIPAKFREGLGTSFVITRGLDQCLFAYPQDEWKQLEERLKSLPFTKADARAFTRFFFSGATECEWDKQGRVNIPPNLREHAGMQKECVIIGVSNRVEVWSKERWEDYFAQSEGSFGEIAEKLVDFNL.

SpoVT-AbrB domains are found at residues Glu5–Glu47 and Ala76–Arg119.

This sequence belongs to the MraZ family. Forms oligomers.

The protein localises to the cytoplasm. Its subcellular location is the nucleoid. The polypeptide is Transcriptional regulator MraZ (Brevibacillus brevis (strain 47 / JCM 6285 / NBRC 100599)).